The sequence spans 319 residues: Protein MGF 360-8L (319 aa).

This sequence belongs to the asfivirus MGF 360 family.

Functionally, plays a role in virus cell tropism, and may be required for efficient virus replication in macrophages. The protein is Protein MGF 360-8L of Ornithodoros (relapsing fever ticks).